The following is a 666-amino-acid chain: ATP-dependent RNA helicase DDX51 (666 aa).

Ala2 bears the N-acetylalanine mark. The tract at residues Tyr9–Glu152 is disordered. Residues Pro10–His28 show a composition bias toward low complexity. Positions Ala33–Gln48 are enriched in basic and acidic residues. Residues Arg49–Ala58 show a composition bias toward low complexity. Positions Arg65–Arg75 are enriched in basic residues. Phosphoserine is present on residues Ser83 and Ser103. Residues Glu97 to Pro108 are compositionally biased toward acidic residues. The short motif at Tyr221–Ile229 is the Q motif element. The Helicase ATP-binding domain maps to Gly243 to Phe452. Position 256 to 263 (Ala256 to Thr263) interacts with ATP. The DEAD box signature appears at Asp371–Asp374. The 147-residue stretch at Val494–Gln640 folds into the Helicase C-terminal domain.

Belongs to the DEAD box helicase family. DDX51/DBP6 subfamily.

The protein resides in the nucleus. The protein localises to the nucleolus. It catalyses the reaction ATP + H2O = ADP + phosphate + H(+). Functionally, ATP-binding RNA helicase involved in the biogenesis of 60S ribosomal subunits. The protein is ATP-dependent RNA helicase DDX51 (DDX51) of Homo sapiens (Human).